The primary structure comprises 279 residues: ATP synthase gamma chain (279 aa).

This sequence belongs to the ATPase gamma chain family. As to quaternary structure, F-type ATPases have 2 components, CF(1) - the catalytic core - and CF(0) - the membrane proton channel. CF(1) has five subunits: alpha(3), beta(3), gamma(1), delta(1), epsilon(1). CF(0) has three main subunits: a, b and c.

It localises to the cell membrane. Functionally, produces ATP from ADP in the presence of a proton gradient across the membrane. The gamma chain is believed to be important in regulating ATPase activity and the flow of protons through the CF(0) complex. The chain is ATP synthase gamma chain from Mycoplasma pneumoniae (strain ATCC 29342 / M129 / Subtype 1) (Mycoplasmoides pneumoniae).